The sequence spans 129 residues: uncharacterized protein (129 aa).

The next 3 membrane-spanning stretches (helical) occupy residues I15–F35, I48–F68, and I107–C127.

It localises to the membrane. This is an uncharacterized protein from Saccharomyces cerevisiae (strain ATCC 204508 / S288c) (Baker's yeast).